The following is a 120-amino-acid chain: Ribosome-binding factor A (120 aa).

This sequence belongs to the RbfA family. Monomer. Binds 30S ribosomal subunits, but not 50S ribosomal subunits or 70S ribosomes.

It localises to the cytoplasm. One of several proteins that assist in the late maturation steps of the functional core of the 30S ribosomal subunit. Associates with free 30S ribosomal subunits (but not with 30S subunits that are part of 70S ribosomes or polysomes). Required for efficient processing of 16S rRNA. May interact with the 5'-terminal helix region of 16S rRNA. This is Ribosome-binding factor A from Chlorobaculum tepidum (strain ATCC 49652 / DSM 12025 / NBRC 103806 / TLS) (Chlorobium tepidum).